We begin with the raw amino-acid sequence, 399 residues long: Acetate kinase (399 aa).

N10 provides a ligand contact to Mg(2+). K17 is a binding site for ATP. A substrate-binding site is contributed by R91. The active-site Proton donor/acceptor is the D148. Residues 208 to 212 (HLGNG), 283 to 285 (DCR), and 331 to 335 (GIGEN) contribute to the ATP site. E385 lines the Mg(2+) pocket.

Belongs to the acetokinase family. As to quaternary structure, homodimer. Mg(2+) is required as a cofactor. Mn(2+) serves as cofactor.

It is found in the cytoplasm. The catalysed reaction is acetate + ATP = acetyl phosphate + ADP. It participates in metabolic intermediate biosynthesis; acetyl-CoA biosynthesis; acetyl-CoA from acetate: step 1/2. Catalyzes the formation of acetyl phosphate from acetate and ATP. Can also catalyze the reverse reaction. The chain is Acetate kinase from Shewanella amazonensis (strain ATCC BAA-1098 / SB2B).